The sequence spans 374 residues: Gibberellin 3-beta-dioxygenase 1 (374 aa).

Positions 206 to 307 (KACAALQLNS…RFSVAYLYGP (102 aa)) constitute a Fe2OG dioxygenase domain. Positions 231, 233, and 288 each coordinate Fe cation. The active site involves arginine 298. Residue arginine 298 participates in 2-oxoglutarate binding.

Belongs to the iron/ascorbate-dependent oxidoreductase family. GA3OX subfamily. Requires L-ascorbate as cofactor. The cofactor is Fe(2+). In terms of tissue distribution, expressed in radicles, roots, internodes, cotyledons, leaves and shoots. Barely detected in developing seeds. Not detected in flowers or young fruits.

The enzyme catalyses gibberellin A20 + 2-oxoglutarate + O2 = gibberellin A1 + succinate + CO2. It functions in the pathway plant hormone biosynthesis; gibberellin biosynthesis. Functionally, converts the inactive gibberellin (GA) precursors GA9 and GA20 in the bioactives gibberellins GA4 and GA1. Has a small activity on GA29, producing GA8. Unable to convert GA20 to GA5, GA5 to GA3 or GA12 to GA14. Involved in the production of bioactive GA for vegetative growth and development, but not for the 3-beta-hydroxylation of GA in developing seeds. In Pisum sativum (Garden pea), this protein is Gibberellin 3-beta-dioxygenase 1 (LE).